The following is a 31-amino-acid chain: Cytochrome b6-f complex subunit 6 (31 aa).

Residues 4 to 26 form a helical membrane-spanning segment; the sequence is ITSYFGFLLAALTVTSALFIGLS.

Belongs to the PetL family. In terms of assembly, the 4 large subunits of the cytochrome b6-f complex are cytochrome b6, subunit IV (17 kDa polypeptide, PetD), cytochrome f and the Rieske protein, while the 4 small subunits are PetG, PetL, PetM and PetN. The complex functions as a dimer.

Its subcellular location is the plastid. The protein resides in the chloroplast thylakoid membrane. Its function is as follows. Component of the cytochrome b6-f complex, which mediates electron transfer between photosystem II (PSII) and photosystem I (PSI), cyclic electron flow around PSI, and state transitions. PetL is important for photoautotrophic growth as well as for electron transfer efficiency and stability of the cytochrome b6-f complex. In Daucus carota (Wild carrot), this protein is Cytochrome b6-f complex subunit 6.